We begin with the raw amino-acid sequence, 176 residues long: NAD(P)H-quinone oxidoreductase subunit I, chloroplastic (176 aa).

4Fe-4S ferredoxin-type domains follow at residues 55–84 and 95–124; these read GRIH…VNWE and QTYS…MTEE. The [4Fe-4S] cluster site is built by C64, C67, C70, C74, C104, C107, C110, and C114.

This sequence belongs to the complex I 23 kDa subunit family. In terms of assembly, NDH is composed of at least 16 different subunits, 5 of which are encoded in the nucleus. Requires [4Fe-4S] cluster as cofactor.

The protein localises to the plastid. Its subcellular location is the chloroplast thylakoid membrane. The catalysed reaction is a plastoquinone + NADH + (n+1) H(+)(in) = a plastoquinol + NAD(+) + n H(+)(out). It carries out the reaction a plastoquinone + NADPH + (n+1) H(+)(in) = a plastoquinol + NADP(+) + n H(+)(out). NDH shuttles electrons from NAD(P)H:plastoquinone, via FMN and iron-sulfur (Fe-S) centers, to quinones in the photosynthetic chain and possibly in a chloroplast respiratory chain. The immediate electron acceptor for the enzyme in this species is believed to be plastoquinone. Couples the redox reaction to proton translocation, and thus conserves the redox energy in a proton gradient. The chain is NAD(P)H-quinone oxidoreductase subunit I, chloroplastic from Mesostigma viride (Green alga).